A 454-amino-acid chain; its full sequence is tRNA modification GTPase MnmE (454 aa).

3 residues coordinate (6S)-5-formyl-5,6,7,8-tetrahydrofolate: Arg-23, Glu-80, and Lys-120. Residues 216 to 377 form the TrmE-type G domain; that stretch reads GMKVVIAGRP…LRNHLKQSMG (162 aa). A K(+)-binding site is contributed by Asn-226. GTP is bound by residues 226 to 231, 245 to 251, 270 to 273, 335 to 338, and 358 to 360; these read NAGKSS, TDIAGTT, DTAG, NKAD, and SAR. Ser-230 contacts Mg(2+). Residues Thr-245, Ile-247, and Thr-250 each coordinate K(+). Thr-251 provides a ligand contact to Mg(2+). Position 454 (Lys-454) interacts with (6S)-5-formyl-5,6,7,8-tetrahydrofolate.

This sequence belongs to the TRAFAC class TrmE-Era-EngA-EngB-Septin-like GTPase superfamily. TrmE GTPase family. Homodimer. Heterotetramer of two MnmE and two MnmG subunits. K(+) serves as cofactor.

It localises to the cytoplasm. Exhibits a very high intrinsic GTPase hydrolysis rate. Involved in the addition of a carboxymethylaminomethyl (cmnm) group at the wobble position (U34) of certain tRNAs, forming tRNA-cmnm(5)s(2)U34. The sequence is that of tRNA modification GTPase MnmE from Salmonella gallinarum (strain 287/91 / NCTC 13346).